We begin with the raw amino-acid sequence, 411 residues long: MLERMLPFLGRKRDKAAADLPVRVGHSAPRNSRMLEYDQNLVWVTLLLLAYGLVMVYSATISFHDSPRYAQWSPYHYFIRDLFSIAAALLASWIVVQIPMAELQKWSMRFFFLSLIGLVLVLLPHIGKDVNGSKRWVVFPGGLNFQPSELVKLTALIYAADFMVRKQEVKQSLLKTFLPMMAVMMIVGVLLLAEPDMGAFLVIASITLAILFLGGANGKLFSVFSVAVIGAFVLMIVLSPWRRDRIFAYLNPWSESNALGSAYQLSHALIAMGRGEWFGVGLGGSIEKLHYLPEAHTDFLLAIIGEELGLVGVGVVIFAFYWIVRRAFDIGRQALVLDRMYSALVAQGIGVWIGGQAFINIGVNLGLLPTKGLTLPLMSYGGSALLLNCMAIAVLLRVDFENRILMRGGHV.

Over 1 to 40 the chain is Cytoplasmic; that stretch reads MLERMLPFLGRKRDKAAADLPVRVGHSAPRNSRMLEYDQN. A helical transmembrane segment spans residues 41 to 61; it reads LVWVTLLLLAYGLVMVYSATI. The Periplasmic portion of the chain corresponds to 62–81; that stretch reads SFHDSPRYAQWSPYHYFIRD. A helical transmembrane segment spans residues 82–102; sequence LFSIAAALLASWIVVQIPMAE. Over 103–109 the chain is Cytoplasmic; that stretch reads LQKWSMR. The chain crosses the membrane as a helical span at residues 110–130; it reads FFFLSLIGLVLVLLPHIGKDV. Over 131–136 the chain is Periplasmic; it reads NGSKRW. Residues 137–157 traverse the membrane as a helical segment; that stretch reads VVFPGGLNFQPSELVKLTALI. Residues 158-172 are Cytoplasmic-facing; it reads YAADFMVRKQEVKQS. A helical transmembrane segment spans residues 173 to 193; the sequence is LLKTFLPMMAVMMIVGVLLLA. The Periplasmic segment spans residues 194–196; that stretch reads EPD. Residues 197 to 217 traverse the membrane as a helical segment; sequence MGAFLVIASITLAILFLGGAN. Topologically, residues 218–219 are cytoplasmic; the sequence is GK. Residues 220–240 traverse the membrane as a helical segment; that stretch reads LFSVFSVAVIGAFVLMIVLSP. Residues 241-298 are Periplasmic-facing; it reads WRRDRIFAYLNPWSESNALGSAYQLSHALIAMGRGEWFGVGLGGSIEKLHYLPEAHTD. A helical transmembrane segment spans residues 299-319; it reads FLLAIIGEELGLVGVGVVIFA. At 320-347 the chain is on the cytoplasmic side; the sequence is FYWIVRRAFDIGRQALVLDRMYSALVAQ. Residues 348-368 form a helical membrane-spanning segment; sequence GIGVWIGGQAFINIGVNLGLL. Residues 369–374 lie on the Periplasmic side of the membrane; sequence PTKGLT. A helical transmembrane segment spans residues 375–395; sequence LPLMSYGGSALLLNCMAIAVL. The Cytoplasmic portion of the chain corresponds to 396–411; it reads LRVDFENRILMRGGHV.

Belongs to the SEDS family. FtsW subfamily.

Its subcellular location is the cell inner membrane. The enzyme catalyses [GlcNAc-(1-&gt;4)-Mur2Ac(oyl-L-Ala-gamma-D-Glu-L-Lys-D-Ala-D-Ala)](n)-di-trans,octa-cis-undecaprenyl diphosphate + beta-D-GlcNAc-(1-&gt;4)-Mur2Ac(oyl-L-Ala-gamma-D-Glu-L-Lys-D-Ala-D-Ala)-di-trans,octa-cis-undecaprenyl diphosphate = [GlcNAc-(1-&gt;4)-Mur2Ac(oyl-L-Ala-gamma-D-Glu-L-Lys-D-Ala-D-Ala)](n+1)-di-trans,octa-cis-undecaprenyl diphosphate + di-trans,octa-cis-undecaprenyl diphosphate + H(+). It functions in the pathway cell wall biogenesis; peptidoglycan biosynthesis. In terms of biological role, peptidoglycan polymerase that is essential for cell division. The protein is Probable peptidoglycan glycosyltransferase FtsW of Thiomonas intermedia (strain K12) (Thiobacillus intermedius).